Reading from the N-terminus, the 378-residue chain is Acetylornithine deacetylase (378 aa).

Histidine 76 is a binding site for Zn(2+). Aspartate 78 is a catalytic residue. Aspartate 108 serves as a coordination point for Zn(2+). Glutamate 140 is an active-site residue. Residues glutamate 141, glutamate 165, and histidine 351 each coordinate Zn(2+).

The protein belongs to the peptidase M20A family. ArgE subfamily. As to quaternary structure, homodimer. It depends on Zn(2+) as a cofactor. Co(2+) is required as a cofactor. Requires glutathione as cofactor.

The protein localises to the cytoplasm. It catalyses the reaction N(2)-acetyl-L-ornithine + H2O = L-ornithine + acetate. The protein operates within amino-acid biosynthesis; L-arginine biosynthesis; L-ornithine from N(2)-acetyl-L-ornithine (linear): step 1/1. Functionally, catalyzes the hydrolysis of the amide bond of N(2)-acetylated L-amino acids. Cleaves the acetyl group from N-acetyl-L-ornithine to form L-ornithine, an intermediate in L-arginine biosynthesis pathway, and a branchpoint in the synthesis of polyamines. This chain is Acetylornithine deacetylase, found in Aliivibrio fischeri (strain MJ11) (Vibrio fischeri).